We begin with the raw amino-acid sequence, 247 residues long: 2,3-bisphosphoglycerate-dependent phosphoglycerate mutase (247 aa).

Residues 8–15 (RHGESTWN), 21–22 (TG), Arg-60, 87–90 (ERHY), Lys-98, 114–115 (RR), and 183–184 (GN) each bind substrate. The Tele-phosphohistidine intermediate role is filled by His-9. The active-site Proton donor/acceptor is Glu-87.

It belongs to the phosphoglycerate mutase family. BPG-dependent PGAM subfamily. Homodimer.

The enzyme catalyses (2R)-2-phosphoglycerate = (2R)-3-phosphoglycerate. The protein operates within carbohydrate degradation; glycolysis; pyruvate from D-glyceraldehyde 3-phosphate: step 3/5. Its function is as follows. Catalyzes the interconversion of 2-phosphoglycerate and 3-phosphoglycerate. In Leptothrix cholodnii (strain ATCC 51168 / LMG 8142 / SP-6) (Leptothrix discophora (strain SP-6)), this protein is 2,3-bisphosphoglycerate-dependent phosphoglycerate mutase.